Here is a 381-residue protein sequence, read N- to C-terminus: Teichoic acid glycerol-phosphate primase (381 aa).

This sequence belongs to the CDP-glycerol glycerophosphotransferase family.

The protein localises to the cell membrane. The enzyme catalyses N-acetyl-beta-D-mannosaminyl-(1-&gt;4)-N-acetyl-alpha-D-glucosaminyl di-trans,octa-cis-undecaprenyl diphosphate + CDP-glycerol = 4-O-[(2R)-glycerylphospho]-N-acetyl-beta-D-mannosaminyl-(1-&gt;4)-N-acetyl-alpha-D-glucosaminyl di-trans,octa-cis-undecaprenyl diphosphate + CMP + H(+). It participates in cell wall biogenesis; poly(glycerol phosphate) teichoic acid biosynthesis. Functionally, catalyzes the addition of a single glycerol phosphate residue to the prenoldiphosphate-linked disaccharide, as a primer for polymerisation by TagF. This Bacillus subtilis (strain 168) protein is Teichoic acid glycerol-phosphate primase (tagB).